Reading from the N-terminus, the 216-residue chain is Probable transaldolase (216 aa).

The active-site Schiff-base intermediate with substrate is the Lys-85.

Belongs to the transaldolase family. Type 3B subfamily.

It localises to the cytoplasm. The catalysed reaction is D-sedoheptulose 7-phosphate + D-glyceraldehyde 3-phosphate = D-erythrose 4-phosphate + beta-D-fructose 6-phosphate. The protein operates within carbohydrate degradation; pentose phosphate pathway; D-glyceraldehyde 3-phosphate and beta-D-fructose 6-phosphate from D-ribose 5-phosphate and D-xylulose 5-phosphate (non-oxidative stage): step 2/3. Its function is as follows. Transaldolase is important for the balance of metabolites in the pentose-phosphate pathway. This is Probable transaldolase from Dehalococcoides mccartyi (strain ATCC BAA-2266 / KCTC 15142 / 195) (Dehalococcoides ethenogenes (strain 195)).